Here is a 521-residue protein sequence, read N- to C-terminus: Ribonuclease Y (521 aa).

A helical membrane pass occupies residues 5 to 25 (LLLILTAVIMLIVGFAVGAIL). The interval 77-107 (ELKDRRGEVQKQENRLIQREETMDRKDATLD) is disordered. The 61-residue stretch at 211-271 (TVTVVTLPND…IRREIARMTL (61 aa)) folds into the KH domain. One can recognise an HD domain in the interval 337 to 430 (VLNHSIEVAK…VAASDAISAA (94 aa)).

It belongs to the RNase Y family.

The protein resides in the cell membrane. Functionally, endoribonuclease that initiates mRNA decay. The sequence is that of Ribonuclease Y from Latilactobacillus sakei subsp. sakei (strain 23K) (Lactobacillus sakei subsp. sakei).